The primary structure comprises 579 residues: Protein disulfide isomerase-like 1-3 (579 aa).

An N-terminal signal peptide occupies residues 1 to 25 (MASSSTSISLLLFVSFILLLVNSRA). An N-linked (GlcNAc...) asparagine glycan is attached at Asn-27. Composition is skewed to basic and acidic residues over residues 44–69 (EESK…RDFE) and 80–89 (EFHHGDHGYE). The tract at residues 44-91 (EESKEQSHGGGSYHEEEHDHQHRDFENYDDLEQGGGEFHHGDHGYEEE) is disordered. The Thioredoxin 1 domain occupies 81-204 (FHHGDHGYEE…IVTWLKKKAS (124 aa)). Asn-108 and Asn-115 each carry an N-linked (GlcNAc...) asparagine glycan. Catalysis depends on nucleophile residues Cys-128 and Cys-131. Cys-128 and Cys-131 are joined by a disulfide. 4 N-linked (GlcNAc...) asparagine glycosylation sites follow: Asn-209, Asn-293, Asn-313, and Asn-338. The 131-residue stretch at 416 to 546 (DFLADKLKPF…LYKFLKKHAS (131 aa)) folds into the Thioredoxin 2 domain. Residues Cys-467 and Cys-470 each act as nucleophile in the active site. Cys-467 and Cys-470 are oxidised to a cystine. N-linked (GlcNAc...) asparagine glycosylation occurs at Asn-520. The interval 558–579 (EPVISTMKSDEKIEGDSSKDEL) is disordered. Over residues 565–579 (KSDEKIEGDSSKDEL) the composition is skewed to basic and acidic residues. A Prevents secretion from ER motif is present at residues 576–579 (KDEL).

This sequence belongs to the protein disulfide isomerase family. As to expression, widely expressed.

It localises to the endoplasmic reticulum lumen. It carries out the reaction Catalyzes the rearrangement of -S-S- bonds in proteins.. Acts as a protein-folding catalyst that interacts with nascent polypeptides to catalyze the formation, isomerization, and reduction or oxidation of disulfide bonds. This is Protein disulfide isomerase-like 1-3 (PDIL1-3) from Arabidopsis thaliana (Mouse-ear cress).